Reading from the N-terminus, the 284-residue chain is Tropomyosin (284 aa).

Residues 1–284 are a coiled coil; sequence MEAIKKKMQA…DQTFAELTGY (284 aa).

It belongs to the tropomyosin family. In terms of assembly, homodimer.

Functionally, tropomyosin, in association with the troponin complex, plays a central role in the calcium dependent regulation of muscle contraction. This Dermatophagoides farinae (American house dust mite) protein is Tropomyosin.